A 325-amino-acid polypeptide reads, in one-letter code: UPF0285 protein MmarC7_1666 (325 aa).

It belongs to the UPF0285 family.

The protein is UPF0285 protein MmarC7_1666 of Methanococcus maripaludis (strain C7 / ATCC BAA-1331).